A 170-amino-acid chain; its full sequence is 3-hydroxydecanoyl-[acyl-carrier-protein] dehydratase (170 aa).

Residue H69 is part of the active site.

This sequence belongs to the thioester dehydratase family. FabA subfamily. As to quaternary structure, homodimer.

The protein localises to the cytoplasm. It carries out the reaction a (3R)-hydroxyacyl-[ACP] = a (2E)-enoyl-[ACP] + H2O. It catalyses the reaction (3R)-hydroxydecanoyl-[ACP] = (2E)-decenoyl-[ACP] + H2O. The catalysed reaction is (2E)-decenoyl-[ACP] = (3Z)-decenoyl-[ACP]. Its pathway is lipid metabolism; fatty acid biosynthesis. Its function is as follows. Necessary for the introduction of cis unsaturation into fatty acids. Catalyzes the dehydration of (3R)-3-hydroxydecanoyl-ACP to E-(2)-decenoyl-ACP and then its isomerization to Z-(3)-decenoyl-ACP. Can catalyze the dehydratase reaction for beta-hydroxyacyl-ACPs with saturated chain lengths up to 16:0, being most active on intermediate chain length. This is 3-hydroxydecanoyl-[acyl-carrier-protein] dehydratase from Idiomarina loihiensis (strain ATCC BAA-735 / DSM 15497 / L2-TR).